We begin with the raw amino-acid sequence, 332 residues long: tRNA-dihydrouridine(20/20a) synthase (332 aa).

FMN-binding positions include 20–22 (PMM) and Gln73. Catalysis depends on Cys103, which acts as the Proton donor. Residues Lys142, His174, 214 to 216 (NGG), and 236 to 237 (GR) each bind FMN.

The protein belongs to the Dus family. DusA subfamily. FMN is required as a cofactor.

The catalysed reaction is 5,6-dihydrouridine(20) in tRNA + NADP(+) = uridine(20) in tRNA + NADPH + H(+). The enzyme catalyses 5,6-dihydrouridine(20) in tRNA + NAD(+) = uridine(20) in tRNA + NADH + H(+). It carries out the reaction 5,6-dihydrouridine(20a) in tRNA + NADP(+) = uridine(20a) in tRNA + NADPH + H(+). It catalyses the reaction 5,6-dihydrouridine(20a) in tRNA + NAD(+) = uridine(20a) in tRNA + NADH + H(+). Functionally, catalyzes the synthesis of 5,6-dihydrouridine (D), a modified base found in the D-loop of most tRNAs, via the reduction of the C5-C6 double bond in target uridines. Specifically modifies U20 and U20a in tRNAs. This is tRNA-dihydrouridine(20/20a) synthase from Pseudomonas aeruginosa (strain ATCC 15692 / DSM 22644 / CIP 104116 / JCM 14847 / LMG 12228 / 1C / PRS 101 / PAO1).